The chain runs to 782 residues: Translation initiation factor IF-2 (782 aa).

Residues Asp-47–Glu-196 are disordered. Residues Thr-53–Thr-65 are compositionally biased toward basic and acidic residues. Residues Ser-66–Thr-81 are compositionally biased toward polar residues. Low complexity-rich tracts occupy residues Asn-82 to Pro-93 and Asn-118 to Gly-170. Residues Glu-283–Lys-452 enclose the tr-type G domain. Residues Gly-292–Thr-299 form a G1 region. Gly-292–Thr-299 contributes to the GTP binding site. The tract at residues Gly-317 to His-321 is G2. The G3 stretch occupies residues Asp-338–Gly-341. Residues Asp-338–His-342 and Asn-392–Asp-395 contribute to the GTP site. The G4 stretch occupies residues Asn-392 to Asp-395. The segment at Ser-428–Lys-430 is G5.

The protein belongs to the TRAFAC class translation factor GTPase superfamily. Classic translation factor GTPase family. IF-2 subfamily.

Its subcellular location is the cytoplasm. Its function is as follows. One of the essential components for the initiation of protein synthesis. Protects formylmethionyl-tRNA from spontaneous hydrolysis and promotes its binding to the 30S ribosomal subunits. Also involved in the hydrolysis of GTP during the formation of the 70S ribosomal complex. The polypeptide is Translation initiation factor IF-2 (Listeria monocytogenes serotype 4b (strain CLIP80459)).